Consider the following 106-residue polypeptide: MANNEHVTPGEDDQQITLIDEKGNEELYQVLFTFDSEDYGKSYVLLYPASESDDQEVEIQAFSFTPDENGDASSGDLFPIEDDAEWDMVEEVLNTFLADDDSNLKD.

It belongs to the UPF0473 family.

The sequence is that of UPF0473 protein LCABL_08490 from Lacticaseibacillus casei (strain BL23) (Lactobacillus casei).